The primary structure comprises 169 residues: Crossover junction endodeoxyribonuclease RuvC (169 aa).

Active-site residues include Asp7, Glu67, and Asp139. Residues Asp7, Glu67, and Asp139 each contribute to the Mg(2+) site.

The protein belongs to the RuvC family. As to quaternary structure, homodimer which binds Holliday junction (HJ) DNA. The HJ becomes 2-fold symmetrical on binding to RuvC with unstacked arms; it has a different conformation from HJ DNA in complex with RuvA. In the full resolvosome a probable DNA-RuvA(4)-RuvB(12)-RuvC(2) complex forms which resolves the HJ. It depends on Mg(2+) as a cofactor.

It is found in the cytoplasm. The enzyme catalyses Endonucleolytic cleavage at a junction such as a reciprocal single-stranded crossover between two homologous DNA duplexes (Holliday junction).. Its function is as follows. The RuvA-RuvB-RuvC complex processes Holliday junction (HJ) DNA during genetic recombination and DNA repair. Endonuclease that resolves HJ intermediates. Cleaves cruciform DNA by making single-stranded nicks across the HJ at symmetrical positions within the homologous arms, yielding a 5'-phosphate and a 3'-hydroxyl group; requires a central core of homology in the junction. The consensus cleavage sequence is 5'-(A/T)TT(C/G)-3'. Cleavage occurs on the 3'-side of the TT dinucleotide at the point of strand exchange. HJ branch migration catalyzed by RuvA-RuvB allows RuvC to scan DNA until it finds its consensus sequence, where it cleaves and resolves the cruciform DNA. This Rhodospirillum rubrum (strain ATCC 11170 / ATH 1.1.1 / DSM 467 / LMG 4362 / NCIMB 8255 / S1) protein is Crossover junction endodeoxyribonuclease RuvC.